The following is a 132-amino-acid chain: NADPH-dependent 7-cyano-7-deazaguanine reductase (132 aa).

C34 (thioimide intermediate) is an active-site residue. D41 acts as the Proton donor in catalysis. Residues 56–58 and 75–76 contribute to the substrate site; these read IEL and HE.

Belongs to the GTP cyclohydrolase I family. QueF type 1 subfamily.

It is found in the cytoplasm. It catalyses the reaction 7-aminomethyl-7-carbaguanine + 2 NADP(+) = 7-cyano-7-deazaguanine + 2 NADPH + 3 H(+). The protein operates within tRNA modification; tRNA-queuosine biosynthesis. Functionally, catalyzes the NADPH-dependent reduction of 7-cyano-7-deazaguanine (preQ0) to 7-aminomethyl-7-deazaguanine (preQ1). The polypeptide is NADPH-dependent 7-cyano-7-deazaguanine reductase (Vesicomyosocius okutanii subsp. Calyptogena okutanii (strain HA)).